The chain runs to 84 residues: MKVSVLITLAVLGVMFLLTSAEERGSDQMDSPAWLKSMEIIFQSEERECRWLFGGCEKDSDCCEHLGCRRAKPSWCGWDFTVGK.

An N-terminal signal peptide occupies residues 1 to 21 (MKVSVLITLAVLGVMFLLTSA). Positions 22 to 47 (EERGSDQMDSPAWLKSMEIIFQSEER) are excised as a propeptide. 3 cysteine pairs are disulfide-bonded: Cys49/Cys63, Cys56/Cys68, and Cys62/Cys76. The residue at position 82 (Val82) is a Valine amide.

The protein belongs to the neurotoxin 10 (Hwtx-1) family. 05 (F4a) subfamily. Expressed by the venom gland.

Its subcellular location is the secreted. Its function is as follows. Probable ion channel inhibitor. The protein is U21-theraphotoxin-Cg1a 1 of Chilobrachys guangxiensis (Chinese earth tiger tarantula).